We begin with the raw amino-acid sequence, 291 residues long: Polyamine aminopropyltransferase (291 aa).

One can recognise a PABS domain in the interval 5 to 245; sequence PGPIVLMEPL…YAVNFVLGSL (241 aa). Q36 contributes to the S-methyl-5'-thioadenosine binding site. Spermidine-binding residues include H67 and E91. S-methyl-5'-thioadenosine is bound by residues D111 and 143 to 144; that span reads DG. D164 (proton acceptor) is an active-site residue.

Belongs to the spermidine/spermine synthase family. As to quaternary structure, homodimer or homotetramer.

The protein resides in the cytoplasm. It carries out the reaction norspermidine + S-adenosyl 3-(methylsulfanyl)propylamine = norspermine + S-methyl-5'-thioadenosine + H(+). It catalyses the reaction S-adenosyl 3-(methylsulfanyl)propylamine + spermidine = thermospermine + S-methyl-5'-thioadenosine + H(+). Functionally, involved in the biosynthesis of polyamines which are thought to support the growth of thermophilic microorganisms under high-temperature conditions. It seems that long-chain and branched-chain of polyamines effectively stabilize DNA and RNA, respectively. Catalyzes the irreversible transfer of a propylamine group from the amino donor S-adenosylmethioninamine (decarboxy-AdoMet) to norspermidine and 1,3-diaminopropane to yield norspermine, and to spermidine to yield thermospermine. It can also synthesize thermospermine from putrescine (1,4-diaminobutane) and caldopentamine from norspermine with a very low activity. The biosynthesis of caldohexamine and caldoheptamine from caldopentamine has been also observed. This Pyrobaculum aerophilum (strain ATCC 51768 / DSM 7523 / JCM 9630 / CIP 104966 / NBRC 100827 / IM2) protein is Polyamine aminopropyltransferase.